The sequence spans 300 residues: 4-hydroxy-tetrahydrodipicolinate synthase (300 aa).

Thr56 is a pyruvate binding site. Tyr145 acts as the Proton donor/acceptor in catalysis. The active-site Schiff-base intermediate with substrate is Lys173. Residue Val215 coordinates pyruvate.

This sequence belongs to the DapA family. Homotetramer; dimer of dimers.

The protein resides in the cytoplasm. It catalyses the reaction L-aspartate 4-semialdehyde + pyruvate = (2S,4S)-4-hydroxy-2,3,4,5-tetrahydrodipicolinate + H2O + H(+). It participates in amino-acid biosynthesis; L-lysine biosynthesis via DAP pathway; (S)-tetrahydrodipicolinate from L-aspartate: step 3/4. Functionally, catalyzes the condensation of (S)-aspartate-beta-semialdehyde [(S)-ASA] and pyruvate to 4-hydroxy-tetrahydrodipicolinate (HTPA). In Prochlorococcus marinus (strain MIT 9301), this protein is 4-hydroxy-tetrahydrodipicolinate synthase.